Consider the following 115-residue polypeptide: Replication initiation control protein YabA (115 aa).

Residues His85, Cys87, Cys101, and Cys104 each coordinate Zn(2+).

The protein belongs to the YabA family. As to quaternary structure, homotetramer. Interacts with both DnaA and DnaN, acting as a bridge between these two proteins. Requires Zn(2+) as cofactor.

Its subcellular location is the cytoplasm. It is found in the nucleoid. Functionally, involved in control of chromosome replication initiation. Inhibits the cooperative binding of DnaA to the oriC region, thus negatively regulating initiation of chromosome replication. Inhibits the ability of DnaA-ATP to form a helix on DNA; does not disassemble preformed DnaA-DNA helices. Decreases the residence time of DnaA on the chromosome at its binding sites (oriC, replication forks and promoter-binding sites). Tethers DnaA to the replication machinery via the DNA polymerase beta sliding clamp subunit (dnaN). Associates with oriC and other DnaA targets on the chromosome in a DnaA-dependent manner. This Lactiplantibacillus plantarum (strain ATCC BAA-793 / NCIMB 8826 / WCFS1) (Lactobacillus plantarum) protein is Replication initiation control protein YabA.